The following is a 199-amino-acid chain: Imidazoleglycerol-phosphate dehydratase (199 aa).

The protein belongs to the imidazoleglycerol-phosphate dehydratase family.

It is found in the cytoplasm. It carries out the reaction D-erythro-1-(imidazol-4-yl)glycerol 3-phosphate = 3-(imidazol-4-yl)-2-oxopropyl phosphate + H2O. The protein operates within amino-acid biosynthesis; L-histidine biosynthesis; L-histidine from 5-phospho-alpha-D-ribose 1-diphosphate: step 6/9. This is Imidazoleglycerol-phosphate dehydratase from Kineococcus radiotolerans (strain ATCC BAA-149 / DSM 14245 / SRS30216).